Here is an 815-residue protein sequence, read N- to C-terminus: Probable AMP deaminase (815 aa).

The helical transmembrane segment at 5–27 threads the bilayer; that stretch reads YALHLAVATLLGASFAAASAYYM. Disordered regions lie at residues 53–116 and 144–173; these read LLDA…PVPT and LLTNGTIGSDPLPGKASQNGDTKPVPSTNM. A compositionally biased stretch (low complexity) spans 105–116; the sequence is VRPTTPRSPVPT. Positions 159–173 are enriched in polar residues; the sequence is ASQNGDTKPVPSTNM. Zn(2+) contacts are provided by His367 and His369. Substrate is bound by residues His369 and 438 to 443; that span reads KFNLKY. Residue His635 coordinates Zn(2+). Substrate is bound at residue Glu638. The active-site Proton acceptor is His657. Asp712 contributes to the Zn(2+) binding site. Residue 713–716 coordinates substrate; that stretch reads DPLQ.

The protein belongs to the metallo-dependent hydrolases superfamily. Adenosine and AMP deaminases family. As to quaternary structure, homodimer. Zn(2+) is required as a cofactor.

The protein localises to the membrane. It carries out the reaction AMP + H2O + H(+) = IMP + NH4(+). It participates in purine metabolism; IMP biosynthesis via salvage pathway; IMP from AMP: step 1/1. In terms of biological role, AMP deaminase plays a critical role in energy metabolism. This chain is Probable AMP deaminase (AMPD), found in Oryza sativa subsp. japonica (Rice).